The primary structure comprises 943 residues: Protein translocase subunit SecA (943 aa).

Residues Gln77, 95 to 99 (GEGKT), and Asp484 each bind ATP.

The protein belongs to the SecA family. In terms of assembly, monomer and homodimer. Part of the essential Sec protein translocation apparatus which comprises SecA, SecYEG and auxiliary proteins SecDF. Other proteins may also be involved.

The protein localises to the cell membrane. Its subcellular location is the cytoplasm. The catalysed reaction is ATP + H2O + cellular proteinSide 1 = ADP + phosphate + cellular proteinSide 2.. Its function is as follows. Part of the Sec protein translocase complex. Interacts with the SecYEG preprotein conducting channel. Has a central role in coupling the hydrolysis of ATP to the transfer of proteins into and across the cell membrane, serving as an ATP-driven molecular motor driving the stepwise translocation of polypeptide chains across the membrane. This chain is Protein translocase subunit SecA, found in Mesoplasma florum (strain ATCC 33453 / NBRC 100688 / NCTC 11704 / L1) (Acholeplasma florum).